A 162-amino-acid polypeptide reads, in one-letter code: NADH-quinone oxidoreductase subunit I 2 (162 aa).

2 consecutive 4Fe-4S ferredoxin-type domains span residues 52–82 (LRRY…IEAG) and 93–122 (VRYD…EGPN). The [4Fe-4S] cluster site is built by cysteine 62, cysteine 65, cysteine 68, cysteine 72, cysteine 102, cysteine 105, cysteine 108, and cysteine 112.

Belongs to the complex I 23 kDa subunit family. NDH-1 is composed of 14 different subunits. Subunits NuoA, H, J, K, L, M, N constitute the membrane sector of the complex. [4Fe-4S] cluster is required as a cofactor.

It localises to the cell inner membrane. It catalyses the reaction a quinone + NADH + 5 H(+)(in) = a quinol + NAD(+) + 4 H(+)(out). Functionally, NDH-1 shuttles electrons from NADH, via FMN and iron-sulfur (Fe-S) centers, to quinones in the respiratory chain. The immediate electron acceptor for the enzyme in this species is believed to be ubiquinone. Couples the redox reaction to proton translocation (for every two electrons transferred, four hydrogen ions are translocated across the cytoplasmic membrane), and thus conserves the redox energy in a proton gradient. The sequence is that of NADH-quinone oxidoreductase subunit I 2 from Rhodopseudomonas palustris (strain BisB5).